A 408-amino-acid chain; its full sequence is Glutathione-independent formaldehyde dehydrogenase (408 aa).

C61 contributes to the Zn(2+) binding site. Positions 62, 63, and 66 each coordinate NAD(+). Positions 82, 112, 115, 118, 126, and 184 each coordinate Zn(2+). V212, D232, R237, V277, H284, P311, L313, G348, and T350 together coordinate NAD(+).

This sequence belongs to the zinc-containing alcohol dehydrogenase family. The cofactor is Zn(2+).

It catalyses the reaction formaldehyde + NAD(+) + H2O = formate + NADH + 2 H(+). Activity is not inhibited by EDTA, which is probably not sufficient to displace the bound metal. Dehydrogenase that catalyzes the NAD(+)-dependent oxidation of formaldehyde. Exhibits lower activity with acetaldehyde (about 10-fold lower than for formaldehyde), but cannot use methanol, ethanol, 1-butanol, glyoxal or formic acid. Is involved in formaldehyde detoxification. The polypeptide is Glutathione-independent formaldehyde dehydrogenase (Bacillus subtilis (strain 168)).